We begin with the raw amino-acid sequence, 297 residues long: N-acetylmuramic acid 6-phosphate etherase (297 aa).

In terms of domain architecture, SIS spans 55–218; that stretch reads AAAALKSGGR…STGAMVKFGK (164 aa). E83 serves as the catalytic Proton donor. E114 is a catalytic residue.

The protein belongs to the GCKR-like family. MurNAc-6-P etherase subfamily. In terms of assembly, homodimer.

It carries out the reaction N-acetyl-D-muramate 6-phosphate + H2O = N-acetyl-D-glucosamine 6-phosphate + (R)-lactate. It functions in the pathway amino-sugar metabolism; 1,6-anhydro-N-acetylmuramate degradation. It participates in amino-sugar metabolism; N-acetylmuramate degradation. Its pathway is cell wall biogenesis; peptidoglycan recycling. Functionally, specifically catalyzes the cleavage of the D-lactyl ether substituent of MurNAc 6-phosphate, producing GlcNAc 6-phosphate and D-lactate. Together with AnmK, is also required for the utilization of anhydro-N-acetylmuramic acid (anhMurNAc) either imported from the medium or derived from its own cell wall murein, and thus plays a role in cell wall recycling. The protein is N-acetylmuramic acid 6-phosphate etherase of Salmonella schwarzengrund (strain CVM19633).